The chain runs to 291 residues: ATP synthase gamma chain (291 aa).

This sequence belongs to the ATPase gamma chain family. As to quaternary structure, F-type ATPases have 2 components, CF(1) - the catalytic core - and CF(0) - the membrane proton channel. CF(1) has five subunits: alpha(3), beta(3), gamma(1), delta(1), epsilon(1). CF(0) has three main subunits: a, b and c.

It localises to the cell inner membrane. Its function is as follows. Produces ATP from ADP in the presence of a proton gradient across the membrane. The gamma chain is believed to be important in regulating ATPase activity and the flow of protons through the CF(0) complex. In Sulfurihydrogenibium sp. (strain YO3AOP1), this protein is ATP synthase gamma chain.